The sequence spans 233 residues: 2-C-methyl-D-erythritol 4-phosphate cytidylyltransferase (233 aa).

This sequence belongs to the IspD/TarI cytidylyltransferase family. IspD subfamily.

It catalyses the reaction 2-C-methyl-D-erythritol 4-phosphate + CTP + H(+) = 4-CDP-2-C-methyl-D-erythritol + diphosphate. The protein operates within isoprenoid biosynthesis; isopentenyl diphosphate biosynthesis via DXP pathway; isopentenyl diphosphate from 1-deoxy-D-xylulose 5-phosphate: step 2/6. Its function is as follows. Catalyzes the formation of 4-diphosphocytidyl-2-C-methyl-D-erythritol from CTP and 2-C-methyl-D-erythritol 4-phosphate (MEP). The sequence is that of 2-C-methyl-D-erythritol 4-phosphate cytidylyltransferase from Aromatoleum aromaticum (strain DSM 19018 / LMG 30748 / EbN1) (Azoarcus sp. (strain EbN1)).